A 507-amino-acid polypeptide reads, in one-letter code: Putative pentatricopeptide repeat-containing protein At3g16710, mitochondrial (507 aa).

Residues 1 to 48 (MRRSIATGFASIVKGFHLHSHRHRLQISNPRTAASLSLCGFCFWIRAF) constitute a mitochondrion transit peptide. 13 PPR repeats span residues 47–81 (AFSS…RPLP), 82–116 (SIID…GIPP), 117–151 (LLCT…GFEP), 152–186 (DLVT…GFKP), 187–221 (NVVT…GSRP), 222–256 (NVVT…RIEP), 257–291 (NVIT…SVYP), 292–326 (DVFT…GCYP), 327–361 (NEVI…GVVA), 362–396 (NTIT…RAPP), 397–431 (DIRT…EMDI), 432–466 (NIVT…GMKP), and 467–501 (NVIT…GFLP).

It belongs to the PPR family. P subfamily.

It localises to the mitochondrion. The sequence is that of Putative pentatricopeptide repeat-containing protein At3g16710, mitochondrial from Arabidopsis thaliana (Mouse-ear cress).